A 391-amino-acid chain; its full sequence is 23S rRNA (uracil(747)-C(5))-methyltransferase RlmC (391 aa).

[4Fe-4S] cluster-binding residues include Cys-5, Cys-13, Cys-16, and Cys-95. Gln-220, Phe-249, Glu-276, and Asn-322 together coordinate S-adenosyl-L-methionine. The Nucleophile role is filled by Cys-349.

It belongs to the class I-like SAM-binding methyltransferase superfamily. RNA M5U methyltransferase family. RlmC subfamily.

It catalyses the reaction uridine(747) in 23S rRNA + S-adenosyl-L-methionine = 5-methyluridine(747) in 23S rRNA + S-adenosyl-L-homocysteine + H(+). Functionally, catalyzes the formation of 5-methyl-uridine at position 747 (m5U747) in 23S rRNA. This Actinobacillus pleuropneumoniae serotype 3 (strain JL03) protein is 23S rRNA (uracil(747)-C(5))-methyltransferase RlmC.